We begin with the raw amino-acid sequence, 1151 residues long: Elicitor of plant defense protein 1 (1151 aa).

3 disordered regions span residues 22–130 (YQDP…TLGE), 178–197 (ERIR…RSIK), and 236–255 (NYNS…DMHP). Residues 39-49 (IIEDGEPEDEW) are compositionally biased toward acidic residues. Polar residues predominate over residues 64–99 (QNSASRLSKMSLTERFSIQTLDDTDGNTKSNRSSAT). A compositionally biased stretch (low complexity) spans 104 to 122 (NPPDFSNGNDDSNGNSQNP). The segment covering 178-187 (ERIRAEESDS) has biased composition (basic and acidic residues). Residues 242-500 (PPPEPLNTDP…NLCTEAFNPL (259 aa)) enclose the uDENN domain. The 133-residue stretch at 524 to 656 (EIPGSRTIDI…ARRKLMSLLQ (133 aa)) folds into the cDENN domain. Residues 658 to 1019 (AAPHKLRYGV…DREMQPANDA (362 aa)) enclose the dDENN domain. Composition is skewed to polar residues over residues 695–711 (STPK…SSSG) and 744–760 (TSKS…SPVS). Positions 695 to 809 (STPKSTLGKW…SSSFGVDKHP (115 aa)) are disordered. Residues 784 to 798 (LREKRSGHFGEEKMR) are compositionally biased toward basic and acidic residues. The segment at 886–934 (GHCFNYMPKDNTSMCTICNDLAEGDGVYRCTGCKIVSHGRCLGYCSLIC) adopts a Phorbol-ester/DAG-type zinc-finger fold.

Belongs to the EPD1 elicitor family.

The protein localises to the secreted. The protein resides in the host cell. In terms of biological role, acts as an elicitor that triggers cell death and defense responses in the host plants. This chain is Elicitor of plant defense protein 1, found in Gibberella zeae (strain ATCC MYA-4620 / CBS 123657 / FGSC 9075 / NRRL 31084 / PH-1) (Wheat head blight fungus).